We begin with the raw amino-acid sequence, 485 residues long: Programmed cell death protein 7 (485 aa).

Positions 1 to 133 (MALPPFFGQG…EAPPPPADVL (133 aa)) are disordered. Pro residues predominate over residues 12–48 (PGPPPPQPPPPAPFGCPPPPLPSPAFPPPLPQRPGPF). The segment covering 49–71 (PGASAPFLQPPLALQPRASAEAS) has biased composition (low complexity). Pro residues-rich tracts occupy residues 82–96 (PVPPPPLPPPPPQCR) and 109–130 (PPPPGPGPPWSPRWPEAPPPPA). Coiled coils occupy residues 232–335 (VGEA…AAAR) and 362–411 (RSEL…ESKL).

In terms of assembly, interacts with RBM40. Component of the U11/U12 snRNPs that are part of the U12-type spliceosome.

It is found in the nucleus. Its function is as follows. Promotes apoptosis when overexpressed. This Homo sapiens (Human) protein is Programmed cell death protein 7 (PDCD7).